The primary structure comprises 500 residues: uncharacterized protein (500 aa).

The signal sequence occupies residues 1-20; it reads MHSIIFKAAVALLGVSTAAG. The N-linked (GlcNAc...) asparagine glycan is linked to Asn-43. Residues 60 to 232 enclose the FAD-binding PCMH-type domain; it reads TALRPDCIIA…TAFTVKTHTQ (173 aa). Pros-8alpha-FAD histidine is present on His-98. 5 N-linked (GlcNAc...) asparagine glycosylation sites follow: Asn-194, Asn-201, Asn-246, Asn-299, and Asn-414.

Belongs to the oxygen-dependent FAD-linked oxidoreductase family. FAD serves as cofactor.

The protein localises to the secreted. This is an uncharacterized protein from Arthroderma benhamiae (strain ATCC MYA-4681 / CBS 112371) (Trichophyton mentagrophytes).